The primary structure comprises 276 residues: Putative pyridoxine kinase (276 aa).

Asparagine 139 contacts ATP. Glutamate 142 is a Mg(2+) binding site. Residues 176 to 180 (KGGKA), aspartate 188, glycine 213, and lysine 238 contribute to the ATP site.

This sequence belongs to the ThiD family.

It catalyses the reaction pyridoxal + ATP = pyridoxal 5'-phosphate + ADP + H(+). In terms of biological role, phosphorylates B6 vitamers; functions in a salvage pathway. Uses pyridoxal, pyridoxine, and pyridoxamine as substrates. In Staphylococcus aureus (strain COL), this protein is Putative pyridoxine kinase (pdxK).